We begin with the raw amino-acid sequence, 179 residues long: Small ribosomal subunit protein uS5 (179 aa).

Residues methionine 22 to valine 85 form the S5 DRBM domain.

The protein belongs to the universal ribosomal protein uS5 family. Part of the 30S ribosomal subunit. Contacts proteins S4 and S8.

With S4 and S12 plays an important role in translational accuracy. Functionally, located at the back of the 30S subunit body where it stabilizes the conformation of the head with respect to the body. This chain is Small ribosomal subunit protein uS5, found in Xylella fastidiosa (strain M12).